The sequence spans 359 residues: Peptide chain release factor 1 (359 aa).

At Gln236 the chain carries N5-methylglutamine.

The protein belongs to the prokaryotic/mitochondrial release factor family. In terms of processing, methylated by PrmC. Methylation increases the termination efficiency of RF1.

The protein resides in the cytoplasm. Functionally, peptide chain release factor 1 directs the termination of translation in response to the peptide chain termination codons UAG and UAA. The protein is Peptide chain release factor 1 of Streptococcus thermophilus (strain ATCC BAA-250 / LMG 18311).